A 690-amino-acid polypeptide reads, in one-letter code: MDQDFDLDEGAGQFNLKTTLMMFTSNDSQNDDGIWSPGSPYQALEDPSFLDKHFVSDPDRYTADELYSALEKMDGKSDLIGMDDMDNDNCYSLSPPDSGSLPISPASTSPSSYHSSGGEDLMDCYPSIDILQQASEELLYSKDDDYEICSSGPLLAYTNANSVATSAVHQNQQQQQRRLNQAGFPHQNSNGLVRFKSSQPRVLNPASISLNAPSSSFNPQSTSSTPATSSSSSSSTNGGFVKSSTGERRKYPPLRLDEEEIKLCKKEGICLPDFFPLTKAEERDLKRIRRKIRNKRSAQTSRKRKQDYIEQLEDRVSESTKENQALKQQIERLSSENQSVISQLKKLQAQLGQNAKRTTQAGRCLAVFMLSACLLVSPQLSPLGNQDNQKVLECIEEACQPSATSMNSANSAQRAIAGVTAPSVVIPSGGPVMVSTNANRQMNRNAVLNHHNNSKYPASGNQNHHPIALEDLNHPPPTLQPKQSYQQQHQPSMYRRSDETIAMAMAKIGARKGSSTSSSSASSVASSTSTSSATSPIYRTSRTLGAFEDQCDASSDDSNCANMPSLVPMKMSAQPPKRKIVTMNGQPRVTYRAVPASSVNVEQAQYYKVPQQKVQYVTMDRPIKYEVLQLNDYIKMEEESTIRLPNSWSTAGPRLHPQVNASSRTVRPLTVATPVHYNGPSAKKIKTQMF.

Disordered regions lie at residues 87–118 (NDNC…SSGG), 166–192 (SAVH…SNGL), and 205–253 (PASI…KYPP). 3 stretches are compositionally biased toward low complexity: residues 100-116 (SLPI…YHSS), 170-181 (QNQQQQQRRLNQ), and 213-236 (PSSS…SSST). One can recognise a bZIP domain in the interval 284–347 (DLKRIRRKIR…QSVISQLKKL (64 aa)). Positions 286–321 (KRIRRKIRNKRSAQTSRKRKQDYIEQLEDRVSESTK) are basic motif. Residues 295–350 (KRSAQTSRKRKQDYIEQLEDRVSESTKENQALKQQIERLSSENQSVISQLKKLQAQ) adopt a coiled-coil conformation. Residues 326–333 (LKQQIERL) form a leucine-zipper region. The span at 451 to 464 (HNNSKYPASGNQNH) shows a compositional bias: polar residues. Disordered stretches follow at residues 451–495 (HNNS…SMYR) and 509–536 (GARK…ATSP). Composition is skewed to low complexity over residues 480–492 (QPKQ…HQPS) and 514–535 (SSTS…SATS).

It belongs to the bZIP family.

The protein resides in the nucleus. Its function is as follows. Probable transcription factor, required during migration of the gonadal distal tip cells (DTC). Probably regulates cell adhesion of DTCs via modulation of expression of genes involved in integrin-mediated adhesion, including tln-1, src-1, and integrin pat-2. Modulates expression of genes involved in protein trafficking during embryogenesis, including emo-1, sec-61, calu-1, sec-24.1, enpl-1, sar-1 and tfg-1. This Caenorhabditis elegans protein is CREB-H transcription factor homolog let-607.